A 455-amino-acid polypeptide reads, in one-letter code: L-serine dehydratase (455 aa).

It belongs to the iron-sulfur dependent L-serine dehydratase family. It depends on [4Fe-4S] cluster as a cofactor.

The catalysed reaction is L-serine = pyruvate + NH4(+). The protein operates within carbohydrate biosynthesis; gluconeogenesis. In Haemophilus influenzae (strain ATCC 51907 / DSM 11121 / KW20 / Rd), this protein is L-serine dehydratase (sdaA).